Reading from the N-terminus, the 222-residue chain is Probable nicotinate-nucleotide adenylyltransferase (222 aa).

This sequence belongs to the NadD family.

The catalysed reaction is nicotinate beta-D-ribonucleotide + ATP + H(+) = deamido-NAD(+) + diphosphate. It functions in the pathway cofactor biosynthesis; NAD(+) biosynthesis; deamido-NAD(+) from nicotinate D-ribonucleotide: step 1/1. In terms of biological role, catalyzes the reversible adenylation of nicotinate mononucleotide (NaMN) to nicotinic acid adenine dinucleotide (NaAD). The protein is Probable nicotinate-nucleotide adenylyltransferase of Stenotrophomonas maltophilia (strain K279a).